Reading from the N-terminus, the 117-residue chain is DNA-directed RNA polymerase subunit omega (117 aa).

It belongs to the RNA polymerase subunit omega family. The RNAP catalytic core consists of 2 alpha, 1 beta, 1 beta' and 1 omega subunit. When a sigma factor is associated with the core the holoenzyme is formed, which can initiate transcription.

It carries out the reaction RNA(n) + a ribonucleoside 5'-triphosphate = RNA(n+1) + diphosphate. Its function is as follows. Promotes RNA polymerase assembly. Latches the N- and C-terminal regions of the beta' subunit thereby facilitating its interaction with the beta and alpha subunits. The polypeptide is DNA-directed RNA polymerase subunit omega (Jannaschia sp. (strain CCS1)).